Reading from the N-terminus, the 1877-residue chain is Protein TIC 214 (1877 aa).

The next 6 helical transmembrane spans lie at 18–38 (IINSVVMVGLYYGFLTTFSIG), 67–87 (FIAGQLMMFISIYYAPLHLAL), 90–110 (PHTITVLALPYLLFHFFWNNH), 127–147 (LSIQCVFLNNLIFQLFNHFIL), 175–195 (VGWLIGHIFFMKWVELVLVWI), and 224–244 (IFSILLFITCVYYLGRIPSPI). Basic and acidic residues predominate over residues 249 to 258 (FKETSETEER). The disordered stretch occupies residues 249–308 (FKETSETEERGEGEEETDVEIETTFETKGTRQEQEGSTEEDPSLFSEEKEDPDKIDEREE). Composition is skewed to acidic residues over residues 259–271 (GEGEEETDVEIET) and 284–298 (GSTEEDPSLFSEEKE). Residues 299–308 (DPDKIDEREE) show a composition bias toward basic and acidic residues.

The protein belongs to the TIC214 family. Part of the Tic complex.

It is found in the plastid. The protein resides in the chloroplast inner membrane. Functionally, involved in protein precursor import into chloroplasts. May be part of an intermediate translocation complex acting as a protein-conducting channel at the inner envelope. This is Protein TIC 214 from Eucalyptus globulus subsp. globulus (Tasmanian blue gum).